Consider the following 427-residue polypeptide: Gamma-glutamyl phosphate reductase (427 aa).

This sequence belongs to the gamma-glutamyl phosphate reductase family.

It localises to the cytoplasm. It carries out the reaction L-glutamate 5-semialdehyde + phosphate + NADP(+) = L-glutamyl 5-phosphate + NADPH + H(+). It participates in amino-acid biosynthesis; L-proline biosynthesis; L-glutamate 5-semialdehyde from L-glutamate: step 2/2. Functionally, catalyzes the NADPH-dependent reduction of L-glutamate 5-phosphate into L-glutamate 5-semialdehyde and phosphate. The product spontaneously undergoes cyclization to form 1-pyrroline-5-carboxylate. The polypeptide is Gamma-glutamyl phosphate reductase (Brucella ovis (strain ATCC 25840 / 63/290 / NCTC 10512)).